Reading from the N-terminus, the 379-residue chain is Dual-specificity RNA methyltransferase RlmN (379 aa).

Glu95 (proton acceptor) is an active-site residue. One can recognise a Radical SAM core domain in the interval Glu101–Asp345. Cys108 and Cys350 are disulfide-bonded. [4Fe-4S] cluster-binding residues include Cys115, Cys119, and Cys122. Residues Gly176–Glu177, Ser208, Ser230–His232, and Asn307 contribute to the S-adenosyl-L-methionine site. Cys350 (S-methylcysteine intermediate) is an active-site residue.

Belongs to the radical SAM superfamily. RlmN family. [4Fe-4S] cluster serves as cofactor.

The protein resides in the cytoplasm. The catalysed reaction is adenosine(2503) in 23S rRNA + 2 reduced [2Fe-2S]-[ferredoxin] + 2 S-adenosyl-L-methionine = 2-methyladenosine(2503) in 23S rRNA + 5'-deoxyadenosine + L-methionine + 2 oxidized [2Fe-2S]-[ferredoxin] + S-adenosyl-L-homocysteine. The enzyme catalyses adenosine(37) in tRNA + 2 reduced [2Fe-2S]-[ferredoxin] + 2 S-adenosyl-L-methionine = 2-methyladenosine(37) in tRNA + 5'-deoxyadenosine + L-methionine + 2 oxidized [2Fe-2S]-[ferredoxin] + S-adenosyl-L-homocysteine. Specifically methylates position 2 of adenine 2503 in 23S rRNA and position 2 of adenine 37 in tRNAs. m2A2503 modification seems to play a crucial role in the proofreading step occurring at the peptidyl transferase center and thus would serve to optimize ribosomal fidelity. This chain is Dual-specificity RNA methyltransferase RlmN, found in Burkholderia ambifaria (strain MC40-6).